The sequence spans 859 residues: Leucine--tRNA ligase (859 aa).

The 'HIGH' region motif lies at 42-52 (PYPSGRLHMGH). A 'KMSKS' region motif is present at residues 618–622 (KMSKS). An ATP-binding site is contributed by Lys-621.

Belongs to the class-I aminoacyl-tRNA synthetase family.

The protein resides in the cytoplasm. It carries out the reaction tRNA(Leu) + L-leucine + ATP = L-leucyl-tRNA(Leu) + AMP + diphosphate. The protein is Leucine--tRNA ligase of Shewanella baltica (strain OS185).